The following is a 66-amino-acid chain: Cold shock protein CspD (66 aa).

One can recognise a CSD domain in the interval 4–63; the sequence is GKVKWFNNEKGFGFIEVEGGDDVFVHFTAIEGDGYKSLEEGQEVSFEIVEGNRGPQASNV.

The protein localises to the cytoplasm. This Bacillus subtilis (strain 168) protein is Cold shock protein CspD (cspD).